Here is a 343-residue protein sequence, read N- to C-terminus: Hydroxycarboxylic acid receptor 1 (343 aa).

Residues 1-21 (MDNGSCCLIEGEPISQVMPPL) lie on the Extracellular side of the membrane. Asn3 carries N-linked (GlcNAc...) asparagine glycosylation. The helical transmembrane segment at 22–42 (LILVFVLGALGNGIALCGFCF) threads the bilayer. Residues 43–49 (HMKTWKS) are Cytoplasmic-facing. A helical membrane pass occupies residues 50–70 (STIYLFNLAVADFLLMICLPL). Residues 71 to 90 (RTDYYLRRRHWIFGDIACRL) are Extracellular-facing. Cysteines 88 and 165 form a disulfide. Residues 91-111 (VLFKLAMNRAGSIVFLTVVAV) traverse the membrane as a helical segment. Residues 112-131 (DRYFKVVHPHHMVNAISNRT) lie on the Cytoplasmic side of the membrane. The chain crosses the membrane as a helical span at residues 132-152 (AAATACVLWTLVILGTVYLLM). The Extracellular portion of the chain corresponds to 153–182 (ESHLCVQGTLSSCESFIMESANGWHDVMFQ). Residues 183–203 (LEFFLPLTIILFCSVNVVWSL) traverse the membrane as a helical segment. At 204-220 (RRRQQLTRQARMRRATR) the chain is on the cytoplasmic side. A helical transmembrane segment spans residues 221–241 (FIMVVASVFITCYLPSVLARL). The Extracellular segment spans residues 242 to 259 (YFLWTVPTSACDPSVHTA). A helical transmembrane segment spans residues 260 to 280 (LHVTLSFTYLNSMLDPLVYYF). Residues 281 to 343 (SSPSLPKFYT…SDGQWDLQVC (63 aa)) lie on the Cytoplasmic side of the membrane. Over residues 319–334 (CSKSSIDGANRSQRPS) the composition is skewed to polar residues. Residues 319–343 (CSKSSIDGANRSQRPSDGQWDLQVC) are disordered.

It belongs to the G-protein coupled receptor 1 family. In terms of tissue distribution, highly expressed in subcutaneous fat and omental fat and detectable in lower levels in brain and many other tissues. High levels detected in epididymal and subcutaneous fat with slightly lower in omental fat, low levels are detected in the brain, skeletal muscle, kidney, liver and the pancreas (at protein level).

The protein localises to the cell membrane. Functionally, acts as a receptor for L-lactate and mediates its anti-lipolytic effect through a G(i)-protein-mediated pathway. This Mus musculus (Mouse) protein is Hydroxycarboxylic acid receptor 1 (Hcar1).